The sequence spans 159 residues: Putative 4-hydroxy-4-methyl-2-oxoglutarate aldolase (159 aa).

Residues 78 to 81 (GDVI) and R100 contribute to the substrate site. D101 is an a divalent metal cation binding site.

It belongs to the class II aldolase/RraA-like family. In terms of assembly, homotrimer. A divalent metal cation is required as a cofactor.

It catalyses the reaction 4-hydroxy-4-methyl-2-oxoglutarate = 2 pyruvate. The enzyme catalyses oxaloacetate + H(+) = pyruvate + CO2. Its function is as follows. Catalyzes the aldol cleavage of 4-hydroxy-4-methyl-2-oxoglutarate (HMG) into 2 molecules of pyruvate. Also contains a secondary oxaloacetate (OAA) decarboxylase activity due to the common pyruvate enolate transition state formed following C-C bond cleavage in the retro-aldol and decarboxylation reactions. This is Putative 4-hydroxy-4-methyl-2-oxoglutarate aldolase from Mycobacterium sp. (strain KMS).